We begin with the raw amino-acid sequence, 1446 residues long: MARAQALVLALTFQFCAPETETPAAGCTFEEASDPVVPCEFSQAQYDDFQWEQVRIHPGTRTPEDLPHGAYLMVNASQHAPGQRAHIIFQTLSENDTHCVQFSYFLYSRDGHSPGTLGVYVRVNGGPLGSAVWNMTGSHGRQWHQAELAVSTFWPNEYQVLFEALISPDHKGYIGLDDILLFSYPCAKAPHFSRLGDVEVNAGQNASFQCMAAGRAAEAEHFFLQRQSGVLVPAAGVRHISHRRFLATFPLASVGRSEQDLYRCVSQAPRGAGVSNFAELIVKEPPTPIAPPQLLRAGPTYLIIQLNTNSIIGDGPIVRKEIEYRMARGPWAEVHAVNLQTYKLWHLDPDTEYEISVLLTRPGDGGTGRPGPPLISRTKCAEPTRAPKGLAFAEIQARQLTLQWEPLGYNVTRCHTYAVSLCYRYTLGGSHNQTIRECVKMERGASRYTIKNLLPFRNIHVRLILTNPEGRKEGKEVTFQTDEDVPGGIAAESLTFTPLEDMIFLKWEEPQEPNGLITQYEISYQSIESSDPAVNVPGPRRTISKLRNETYHVFSNLHPGTTYLFSVRARTSKGFGQAALTEITTNISAPSFDYADMPSPLGESENTITVLLRPAQGRGAPISVYQVVVEEERPRRLRREPGAQDCFSVPLTFETALARGLVHYFGAELAASSLLEAMPFTVGDNQTYRGFWNPPLEPRKAYLIYFQAASHLKGETRLNCIRIARKAACKESKRPLEVSQRSEEMGLILGICAGGLAVLILLLGAIIVIIRKGRDRYAYSYYPKPVNMTKATVNYRQEKTHMMSAVDRSFTDQSTLQEDERLGLSFMDAPGYSPRGDQRSGGVTEASSLLGGSPRRPCGRKGSPYHTGQLHPAVRVADLLQHINQMKTAEGYGFKQEYESFFEGWDATKKKDKLKGGRQEPVSAYDRHHVKLHPMLADPDADYISANYIDGYHRSNHFIATQGPKPEMIYDFWRMVWQEQCASIVMITKLVEVGRVKCSRYWPEDSDMYGDIKITLVKTETLAEYVVRTFALERRGYSARHEVRQFHFTAWPEHGVPYHATGLLAFIRRVKASTPPDAGPIVIHCSAGTGRTGCYIVLDVMLDMAECEGVVDIYNCVKTLCSRRVNMIQTEEQYIFIHDAILEACLCGETTIPVNEFKATYREMIRIDPQSNSSQLREEFQTLNSVTPPLDVEECSIALLPRNRDKNRSMDVLPPDRCLPFLISSDGDPNNYINAALTDSYTRSAAFIVTLHPLQSTTPDFWRLVYDYGCTSIVMLNQLNQSNSAWPCLQYWPEPGRQQYGLMEVEFVSGTANEDLVSRVFRVQNSSRLQEGHLLVRHFQFLRWSAYRDTPDSRKAFLHLLAEVDKWQAESGDGRTVVHCLNGGGRSGTFCACATVLEMIRCHSLVDVFFAAKTLRNYKPNMVETMDQYHFCYDVALEYLEALELR.

The signal sequence occupies residues Met1–Pro18. At Glu19–Leu749 the chain is on the extracellular side. In terms of domain architecture, MAM spans Ala25 to Lys188. Asn75 carries N-linked (GlcNAc...) asparagine glycosylation. Positions Pro190 to Ser275 constitute an Ig-like C2-type domain. Residues Cys210 and Cys264 are joined by a disulfide bond. 4 Fibronectin type-III domains span residues Pro288–Pro383, Ala386–Asp484, Val485–Ser591, and Phe592–Glu668. The N-linked (GlcNAc...) asparagine glycan is linked to Asn410. Asn685 is a glycosylation site (N-linked (GlcNAc...) asparagine). A helical membrane pass occupies residues Gly750–Ile770. A mediates interaction with CTNNB1 region spans residues Arg771–Lys887. The Cytoplasmic segment spans residues Arg771–Arg1446. The tract at residues Pro830–Thr867 is disordered. A phosphoserine mark is found at Ser848, Ser853, and Ser863. Tyr865 carries the post-translational modification Phosphotyrosine. Tyrosine-protein phosphatase domains lie at Thr888–Ala1144 and Leu1176–Tyr1439. Residues Glu1053, Cys1085–Arg1091, and Gln1129 each bind substrate. The active-site Phosphocysteine intermediate is the Cys1085. Residue Cys1380 is the Phosphocysteine intermediate of the active site.

The protein belongs to the protein-tyrosine phosphatase family. Receptor class 2B subfamily. As to quaternary structure, forms homooligomeric complexes which mediate cell homotypic adhesion. Interacts (via the cytoplasmic juxtamembrane domain) with CTNNB1; may mediate interaction with the cadherin/catenin adhesion complex. Interacts with KIT. May interact with AP3B1. In terms of processing, the extracellular domain is proteolytically processed through cleavage within the fibronectin type-III 4 domain. In addition to the 190 kDa full-length protein, proteolytic products of 100 kDa, 80 kDa and 73 kDa are observed. Post-translationally, N-glycosylated. Phosphorylated on tyrosine residues upon activation of KIT with stem cell factor (SCF). The 73 kDa proteolytic product is not phosphorylated. As to expression, transcripts of different sizes are differentially expressed in a subset of tissues. Detected in brain, lung, skeletal muscle, heart, kidney and placenta. In brain; expressed in olfactory bulb, cerebral cortex, hippocampus and cerebellum.

It localises to the cell junction. Its subcellular location is the cell membrane. The catalysed reaction is O-phospho-L-tyrosyl-[protein] + H2O = L-tyrosyl-[protein] + phosphate. Tyrosine-protein phosphatase which dephosphorylates CTNNB1. Regulates CTNNB1 function both in cell adhesion and signaling. May function in cell proliferation and migration and play a role in the maintenance of epithelial integrity. May play a role in megakaryocytopoiesis. This is Receptor-type tyrosine-protein phosphatase U (Ptpru) from Mus musculus (Mouse).